A 503-amino-acid chain; its full sequence is Pre-glycoprotein polyprotein GP complex (503 aa).

G2 is lipidated: N-myristoyl glycine; by host. Residues 2–17 lie on the Extracellular side of the membrane; sequence GQIVTLIQSIPEVLQE. The helical transmembrane segment at 18 to 33 threads the bilayer; it reads VFNVALIIVSVLCIVK. Topologically, residues 34 to 58 are cytoplasmic; that stretch reads GFVNLMRCGLFQLVTFLILSGRSCD. A Zn(2+)-binding site is contributed by C57. The Extracellular segment spans residues 59–446; the sequence is SMMIDRRHNL…QGKTPLALTD (388 aa). Disulfide bonds link C86–C248, C293–C306, C315–C324, and C378–C399. N-linked (GlcNAc...) asparagine; by host glycans are attached at residues N89, N111, N181, and N241. 4 N-linked (GlcNAc...) asparagine; by host glycosylation sites follow: N379, N387, N404, and N409. A helical transmembrane segment spans residues 447–467; it reads ICFWSLVFYTITVFLHIVGIP. Topologically, residues 468–503 are cytoplasmic; the sequence is THRHIIGDGCPKPHRITRNSLCSCGYYKYQRNLTNG. Zn(2+)-binding residues include H469, H471, C477, H481, C489, and C491.

It belongs to the arenaviridae GPC protein family. Interacts with glycoprotein G2. Part of the GP complex (GP-C) together with glycoprotein G1 and glycoprotein G2. The GP-complex interacts with protein Z, which interacts with ribonucleocapsid; these interactions may induce virion budding. In terms of assembly, homotrimer; disulfide-linked. In pre-fusion state, G1 homotrimers bind G2 homotrimers via ionic interactions. Part of the GP complex (GP-C) together with glycoprotein G2 and the stable signal peptide. The GP-complex interacts with protein Z, which interacts with ribonucleocapsid; these interactions may induce virion budding. As to quaternary structure, homotrimer. Interacts with the stable signal peptide. In pre-fusion state, G2 homotrimers bind G1 homotrimers via ionic interactions. Part of the GP complex (GP-C) together with glycoprotein G1 and the stable signal peptide. Acidification in the endosome triggers rearrangements, which ultimately leads to a 6 helix bundle formed by the two heptad repeat domains (HR1 and HR2) in post-fusion state. The GP-complex interacts with protein Z, which interacts with ribonucleocapsid; these interactions may induce virion budding. Post-translationally, specific enzymatic cleavages in vivo yield mature proteins. GP-C polyprotein is cleaved in the endoplasmic reticulum by the host protease MBTPS1. Only cleaved glycoprotein is incorporated into virions. The SSP remains stably associated with the GP complex following cleavage by signal peptidase and plays crucial roles in the trafficking of GP through the secretory pathway. In terms of processing, myristoylation is necessary for GP2-mediated fusion activity.

Its subcellular location is the virion membrane. The protein localises to the host endoplasmic reticulum membrane. It localises to the host Golgi apparatus membrane. The protein resides in the host cell membrane. In terms of biological role, functions as a cleaved signal peptide that is retained as the third component of the GP complex (GP-C). Helps to stabilize the spike complex in its native conformation. The SSP is required for efficient glycoprotein expression, post-translational maturation cleavage of G1 and G2, glycoprotein transport to the cell surface plasma membrane, formation of infectious virus particles, and acid pH-dependent glycoprotein-mediated cell fusion. Functionally, forms the virion spikes together with glycoprotein G2. The glycoprotein spike trimers are connected to the underlying matrix. Interacts with the host receptor leading to virus endocytosis. Forms the virion spikes together with glycoprotein G1. The glycoprotein spike trimers are connected to the underlying matrix. Class I viral fusion protein that directs fusion of viral and host endosomal membranes, leading to delivery of the nucleocapsid into the cytoplasm. Membrane fusion is mediated by irreversible conformational changes induced by acidification. The protein is Pre-glycoprotein polyprotein GP complex of Cavia cutleri (Guinea pig).